The following is a 167-amino-acid chain: Crossover junction endodeoxyribonuclease RuvC (167 aa).

Catalysis depends on residues D14, E75, and D147. Mg(2+) contacts are provided by D14, E75, and D147.

The protein belongs to the RuvC family. In terms of assembly, homodimer which binds Holliday junction (HJ) DNA. The HJ becomes 2-fold symmetrical on binding to RuvC with unstacked arms; it has a different conformation from HJ DNA in complex with RuvA. In the full resolvosome a probable DNA-RuvA(4)-RuvB(12)-RuvC(2) complex forms which resolves the HJ. Requires Mg(2+) as cofactor.

The protein resides in the cytoplasm. The enzyme catalyses Endonucleolytic cleavage at a junction such as a reciprocal single-stranded crossover between two homologous DNA duplexes (Holliday junction).. The RuvA-RuvB-RuvC complex processes Holliday junction (HJ) DNA during genetic recombination and DNA repair. Endonuclease that resolves HJ intermediates. Cleaves cruciform DNA by making single-stranded nicks across the HJ at symmetrical positions within the homologous arms, yielding a 5'-phosphate and a 3'-hydroxyl group; requires a central core of homology in the junction. The consensus cleavage sequence is 5'-(A/T)TT(C/G)-3'. Cleavage occurs on the 3'-side of the TT dinucleotide at the point of strand exchange. HJ branch migration catalyzed by RuvA-RuvB allows RuvC to scan DNA until it finds its consensus sequence, where it cleaves and resolves the cruciform DNA. The chain is Crossover junction endodeoxyribonuclease RuvC from Synechocystis sp. (strain ATCC 27184 / PCC 6803 / Kazusa).